The primary structure comprises 183 residues: Segregation and condensation protein B (183 aa).

Belongs to the ScpB family. In terms of assembly, homodimer. Homodimerization may be required to stabilize the binding of ScpA to the Smc head domains. Component of a cohesin-like complex composed of ScpA, ScpB and the Smc homodimer, in which ScpA and ScpB bind to the head domain of Smc. The presence of the three proteins is required for the association of the complex with DNA.

It is found in the cytoplasm. Participates in chromosomal partition during cell division. May act via the formation of a condensin-like complex containing Smc and ScpA that pull DNA away from mid-cell into both cell halves. The polypeptide is Segregation and condensation protein B (Streptococcus pyogenes serotype M1).